The chain runs to 576 residues: Trehalase 2 (576 aa).

The protein belongs to the glycosyl hydrolase 15 family.

The catalysed reaction is alpha,alpha-trehalose + H2O = alpha-D-glucose + beta-D-glucose. Its pathway is glycan degradation; trehalose degradation; D-glucose from alpha,alpha-trehalose: step 1/1. Catalyzes the hydrolysis of alpha,alpha-trehalose into two molecules of D-glucose. This is Trehalase 2 (treH2) from Sulfolobus acidocaldarius (strain ATCC 33909 / DSM 639 / JCM 8929 / NBRC 15157 / NCIMB 11770).